We begin with the raw amino-acid sequence, 82 residues long: Turripeptide Gsp9.1 (82 aa).

A signal peptide spans 1-23; that stretch reads MMAKLMITVMMVLLLSLQQGADG. A propeptide spanning residues 24–46 is cleaved from the precursor; it reads RSKRWRKNQMAASSIMRNLITAR. 2 positions are modified to 4-hydroxyproline: proline 49 and proline 50. 3 cysteine pairs are disulfide-bonded: cysteine 53-cysteine 68, cysteine 58-cysteine 72, and cysteine 64-cysteine 79. 4-carboxyglutamate is present on residues glutamate 60 and glutamate 63.

The protein belongs to the Pg turripeptide superfamily. In terms of tissue distribution, expressed by the venom duct.

It localises to the secreted. The protein is Turripeptide Gsp9.1 of Gemmula speciosa (Splendid gem-turris).